The primary structure comprises 80 residues: Small, acid-soluble spore protein Tlp (80 aa).

Over residues 34 to 73 the composition is skewed to basic and acidic residues; that stretch reads AKESMEFATDEEKQRIQEKNARRNESIESFRSEIQDESAA. The interval 34–80 is disordered; that stretch reads AKESMEFATDEEKQRIQEKNARRNESIESFRSEIQDESAARENGYQS.

It belongs to the Tlp family.

It is found in the spore core. In Bacillus velezensis (strain DSM 23117 / BGSC 10A6 / LMG 26770 / FZB42) (Bacillus amyloliquefaciens subsp. plantarum), this protein is Small, acid-soluble spore protein Tlp.